A 311-amino-acid chain; its full sequence is tRNA-cytidine(32) 2-sulfurtransferase (311 aa).

Positions 47 to 52 match the PP-loop motif motif; sequence SGGKDS. Cys-122, Cys-125, and Cys-213 together coordinate [4Fe-4S] cluster.

The protein belongs to the TtcA family. In terms of assembly, homodimer. The cofactor is Mg(2+). [4Fe-4S] cluster is required as a cofactor.

Its subcellular location is the cytoplasm. The enzyme catalyses cytidine(32) in tRNA + S-sulfanyl-L-cysteinyl-[cysteine desulfurase] + AH2 + ATP = 2-thiocytidine(32) in tRNA + L-cysteinyl-[cysteine desulfurase] + A + AMP + diphosphate + H(+). Its pathway is tRNA modification. Functionally, catalyzes the ATP-dependent 2-thiolation of cytidine in position 32 of tRNA, to form 2-thiocytidine (s(2)C32). The sulfur atoms are provided by the cysteine/cysteine desulfurase (IscS) system. This chain is tRNA-cytidine(32) 2-sulfurtransferase, found in Escherichia coli O7:K1 (strain IAI39 / ExPEC).